The chain runs to 324 residues: 7,8-didemethyl-8-hydroxy-5-deazariboflavin synthase (324 aa).

In terms of domain architecture, Radical SAM core spans 4 to 239; the sequence is VTYSKNVFIP…QEVAIQIPPN (236 aa). Residues Cys18, Cys22, and Cys25 each coordinate [4Fe-4S] cluster.

The protein belongs to the radical SAM superfamily. CofG family. As to quaternary structure, consists of two subunits, CofG and CofH. The cofactor is [4Fe-4S] cluster.

The enzyme catalyses 5-amino-5-(4-hydroxybenzyl)-6-(D-ribitylimino)-5,6-dihydrouracil + S-adenosyl-L-methionine = 7,8-didemethyl-8-hydroxy-5-deazariboflavin + 5'-deoxyadenosine + L-methionine + NH4(+) + H(+). The protein operates within cofactor biosynthesis; coenzyme F0 biosynthesis. Its function is as follows. Catalyzes the radical-mediated synthesis of 7,8-didemethyl-8-hydroxy-5-deazariboflavin from 5-amino-5-(4-hydroxybenzyl)-6-(D-ribitylimino)-5,6-dihydrouracil. The chain is 7,8-didemethyl-8-hydroxy-5-deazariboflavin synthase from Archaeoglobus fulgidus (strain ATCC 49558 / DSM 4304 / JCM 9628 / NBRC 100126 / VC-16).